We begin with the raw amino-acid sequence, 285 residues long: Putative hydrolase DDAH2 (285 aa).

Residue His-171 is the Proton donor of the active site. Cys-276 (nucleophile) is an active-site residue.

It belongs to the DDAH family. Post-translationally, phosphorylated by TBK1. Phosphorylation inhibits the translocation into the mitochondrion upon Sendai viral infection. Detected in heart, placenta, lung, liver, skeletal muscle, kidney and pancreas, and at very low levels in brain.

The protein localises to the cytoplasm. The protein resides in the mitochondrion. In terms of biological role, putative hydrolase with unknown substrate. Does not hydrolyze N(G),N(G)-dimethyl-L-arginine (ADMA) which acts as an inhibitor of NOS. In endothelial cells, induces expression of vascular endothelial growth factor (VEGF) via phosphorylation of the transcription factor SP1 by PKA in a process that is independent of NO and NO synthase. Similarly, enhances pancreatic insulin secretion through SP1-mediated transcriptional up-regulation of secretagogin/SCGN, an insulin vesicle docking protein. Upon viral infection, relocates to mitochondria where it promotes mitochondrial fission through activation of DNM1L leading to the inhibition of innate response activation mediated by MAVS. This Homo sapiens (Human) protein is Putative hydrolase DDAH2.